We begin with the raw amino-acid sequence, 1075 residues long: Carbamoyl phosphate synthase large chain (1075 aa).

The interval 2 to 403 (PKRTDIKSIL…SLQKALRGLE (402 aa)) is carboxyphosphate synthetic domain. 12 residues coordinate ATP: Arg129, Arg169, Gly175, Gly176, Glu208, Leu210, Glu215, Gly241, Ile242, His243, Gln285, and Glu299. The ATP-grasp 1 domain occupies 133–328 (DIAMKKIGLD…IAKVAAKLAV (196 aa)). Residues Gln285, Glu299, and Asn301 each coordinate Mg(2+). The Mn(2+) site is built by Gln285, Glu299, and Asn301. Residues 404–553 (VGATGFDPKV…YSTYEDECEA (150 aa)) form an oligomerization domain region. The tract at residues 554-936 (NPSIDRDKIM…AFAKAQLGSN (383 aa)) is carbamoyl phosphate synthetic domain. Residues 679-870 (QHAVDRLKLK…LAKVAARVMA (192 aa)) enclose the ATP-grasp 2 domain. 10 residues coordinate ATP: Arg715, Arg754, Leu756, Glu761, Gly786, Val787, His788, Ser789, Gln829, and Glu841. Residues Gln829, Glu841, and Asn843 each coordinate Mg(2+). Gln829, Glu841, and Asn843 together coordinate Mn(2+). The region spanning 937 to 1075 (STMKKQGRAL…QEMHAQIKKS (139 aa)) is the MGS-like domain. The segment at 937–1075 (STMKKQGRAL…QEMHAQIKKS (139 aa)) is allosteric domain.

Belongs to the CarB family. In terms of assembly, composed of two chains; the small (or glutamine) chain promotes the hydrolysis of glutamine to ammonia, which is used by the large (or ammonia) chain to synthesize carbamoyl phosphate. Tetramer of heterodimers (alpha,beta)4. Requires Mg(2+) as cofactor. Mn(2+) is required as a cofactor.

The catalysed reaction is hydrogencarbonate + L-glutamine + 2 ATP + H2O = carbamoyl phosphate + L-glutamate + 2 ADP + phosphate + 2 H(+). The enzyme catalyses hydrogencarbonate + NH4(+) + 2 ATP = carbamoyl phosphate + 2 ADP + phosphate + 2 H(+). It functions in the pathway amino-acid biosynthesis; L-arginine biosynthesis; carbamoyl phosphate from bicarbonate: step 1/1. Its pathway is pyrimidine metabolism; UMP biosynthesis via de novo pathway; (S)-dihydroorotate from bicarbonate: step 1/3. In terms of biological role, large subunit of the glutamine-dependent carbamoyl phosphate synthetase (CPSase). CPSase catalyzes the formation of carbamoyl phosphate from the ammonia moiety of glutamine, carbonate, and phosphate donated by ATP, constituting the first step of 2 biosynthetic pathways, one leading to arginine and/or urea and the other to pyrimidine nucleotides. The large subunit (synthetase) binds the substrates ammonia (free or transferred from glutamine from the small subunit), hydrogencarbonate and ATP and carries out an ATP-coupled ligase reaction, activating hydrogencarbonate by forming carboxy phosphate which reacts with ammonia to form carbamoyl phosphate. The chain is Carbamoyl phosphate synthase large chain from Salmonella typhimurium (strain LT2 / SGSC1412 / ATCC 700720).